A 288-amino-acid polypeptide reads, in one-letter code: MELRDLQIFQSVADQGSVSSAAKELNYVQSNVTTRIKQLENELKTPLFYRHKRGMTLTAEGRKMLVYVNKILQDVDELKQVFLDSETPSGILKIGTVETVSTLPTILSSYYKSYPNVDLSLQAGLTEELIREVLDHQLDGAFISGPIKHPLIEQYDVSTEKLMLVTQNKAFHIEEFTTTPLLVFNQGCGYRSKLERWLKDEGLLPKRIMEFNILETILNSVALGLGITLVPQSAVHHLSKAGKVHCHAIPEKYGSISTVFIRRKDSYMTNSMRSFLKTIEEHHHINML.

One can recognise an HTH lysR-type domain in the interval Met1 to Thr58. Positions Val18–Lys37 form a DNA-binding region, H-T-H motif.

This sequence belongs to the LysR transcriptional regulatory family.

The protein is HTH-type transcriptional regulator CzcR (czcR) of Bacillus thuringiensis subsp. konkukian (strain 97-27).